Here is a 1196-residue protein sequence, read N- to C-terminus: DNA-directed RNA polymerase subunit beta (1196 aa).

This sequence belongs to the RNA polymerase beta chain family. As to quaternary structure, the RNAP catalytic core consists of 2 alpha, 1 beta, 1 beta' and 1 omega subunit. When a sigma factor is associated with the core the holoenzyme is formed, which can initiate transcription.

It carries out the reaction RNA(n) + a ribonucleoside 5'-triphosphate = RNA(n+1) + diphosphate. In terms of biological role, DNA-dependent RNA polymerase catalyzes the transcription of DNA into RNA using the four ribonucleoside triphosphates as substrates. This Lactococcus lactis subsp. lactis (strain IL1403) (Streptococcus lactis) protein is DNA-directed RNA polymerase subunit beta.